The chain runs to 312 residues: DNA-directed RNA polymerase subunit alpha (312 aa).

The interval 1 to 229 is alpha N-terminal domain (alpha-NTD); sequence MLQYQIDRIE…ELFQPLATVT (229 aa). An alpha C-terminal domain (alpha-CTD) region spans residues 236–312; the sequence is IEPEPSAEAQ…ISIPQSRTSV (77 aa).

The protein belongs to the RNA polymerase alpha chain family. As to quaternary structure, in cyanobacteria the RNAP catalytic core is composed of 2 alpha, 1 beta, 1 beta', 1 gamma and 1 omega subunit. When a sigma factor is associated with the core the holoenzyme is formed, which can initiate transcription.

The enzyme catalyses RNA(n) + a ribonucleoside 5'-triphosphate = RNA(n+1) + diphosphate. Its function is as follows. DNA-dependent RNA polymerase catalyzes the transcription of DNA into RNA using the four ribonucleoside triphosphates as substrates. The chain is DNA-directed RNA polymerase subunit alpha from Synechococcus sp. (strain CC9311).